Here is a 420-residue protein sequence, read N- to C-terminus: 3-isopropylmalate dehydratase large subunit (420 aa).

[4Fe-4S] cluster is bound by residues C301, C361, and C364.

The protein belongs to the aconitase/IPM isomerase family. LeuC type 2 subfamily. In terms of assembly, heterodimer of LeuC and LeuD. The cofactor is [4Fe-4S] cluster.

It carries out the reaction (2R,3S)-3-isopropylmalate = (2S)-2-isopropylmalate. It participates in amino-acid biosynthesis; L-leucine biosynthesis; L-leucine from 3-methyl-2-oxobutanoate: step 2/4. In terms of biological role, catalyzes the isomerization between 2-isopropylmalate and 3-isopropylmalate, via the formation of 2-isopropylmaleate. This Desulfovibrio desulfuricans (strain ATCC 27774 / DSM 6949 / MB) protein is 3-isopropylmalate dehydratase large subunit.